A 623-amino-acid chain; its full sequence is uncharacterized protein (623 aa).

Residues 1–18 (MSSRSGSADTFTQRSDSN) are compositionally biased toward polar residues. Disordered stretches follow at residues 1-107 (MSSR…DPFT), 132-181 (LGSD…EIGA), 207-231 (SWNL…ADTD), 298-349 (REET…ESDQ), 384-464 (RKSV…DRNV), 533-553 (SIND…PPET), and 568-623 (VESR…TKGD). The span at 25–34 (ISLDDVRDNN) shows a compositional bias: basic and acidic residues. Residues 39–49 (SSSGISTTGSS) are compositionally biased toward low complexity. Over residues 132–144 (LGSDTARPTSNGG) the composition is skewed to polar residues. The segment covering 165–177 (STSTWGPSGPTTP) has biased composition (low complexity). Polar residues predominate over residues 328–339 (EKSTFSRISEQP). Low complexity predominate over residues 400 to 417 (QTPTISTASSPIQPSSSP). Residues 533-548 (SINDLQQGTSSSQNQA) show a composition bias toward polar residues. Positions 604-614 (PSASPSTSRTR) are enriched in low complexity.

This is an uncharacterized protein from Emericella nidulans (strain FGSC A4 / ATCC 38163 / CBS 112.46 / NRRL 194 / M139) (Aspergillus nidulans).